Consider the following 757-residue polypeptide: Catalase-peroxidase 2 (757 aa).

Residues 1 to 26 (MKHPLFNQKVLAGFVSMLLISGSAFA) form the signal peptide. A cross-link (tryptophyl-tyrosyl-methioninium (Trp-Tyr) (with M-274)) is located at residues 126–248 (WHSAGTYRTL…LGATHMGLIY (123 aa)). The active-site Proton acceptor is histidine 127. Positions 248–274 (YVNPEGPKGVPDPLGSAKNIRVAFERM) form a cross-link, tryptophyl-tyrosyl-methioninium (Tyr-Met) (with W-126). Histidine 289 serves as a coordination point for heme b.

Belongs to the peroxidase family. Peroxidase/catalase subfamily. Homodimer or homotetramer. Heme b is required as a cofactor. Post-translationally, formation of the three residue Trp-Tyr-Met cross-link is important for the catalase, but not the peroxidase activity of the enzyme.

It catalyses the reaction H2O2 + AH2 = A + 2 H2O. The enzyme catalyses 2 H2O2 = O2 + 2 H2O. In terms of biological role, bifunctional enzyme with both catalase and broad-spectrum peroxidase activity. This chain is Catalase-peroxidase 2, found in Shewanella frigidimarina (strain NCIMB 400).